Consider the following 231-residue polypeptide: Urease accessory protein UreE (231 aa).

Residues 185-231 form a disordered region; the sequence is VASPLDEPHGSGLHIHGIHSHEEGHSHGDHDHDHSHSHGDHDHDHKH. The span at 203–231 shows a compositional bias: basic and acidic residues; it reads HSHEEGHSHGDHDHDHSHSHGDHDHDHKH.

The protein belongs to the UreE family.

The protein resides in the cytoplasm. Functionally, involved in urease metallocenter assembly. Binds nickel. Probably functions as a nickel donor during metallocenter assembly. This is Urease accessory protein UreE from Yersinia pestis bv. Antiqua (strain Antiqua).